The chain runs to 1376 residues: YLP motif-containing protein 1 (1376 aa).

Disordered regions lie at residues 1-335 (MYPN…PEED) and 511-1058 (STIP…PPGR). The segment covering 14–27 (YPPPPVPPPPPPVA) has biased composition (pro residues). Composition is skewed to low complexity over residues 31–50 (ASPG…SSSG) and 59–80 (LAQL…LQPH). Pro residues-rich tracts occupy residues 81–93 (HLPP…PPVM), 102–114 (QPPP…PPGP), 148–158 (PESPPVPPGSY), 166–176 (MPPPQPPPSYY), and 184–204 (YLPP…PPSI). Composition is skewed to polar residues over residues 207 to 216 (GNKTTIQQEP) and 238 to 260 (STMT…LQQR). A compositionally biased stretch (basic residues) spans 261 to 271 (TKVHLPGHKKG). Residues 277 to 286 (DVPEPIKEEA) show a composition bias toward basic and acidic residues. 4 stretches are compositionally biased toward pro residues: residues 303–320 (PPLP…PPEE), 511–537 (STIP…PGMP), 545–594 (LPPP…PQGM), and 632–641 (PPSPYHPPPQ). The segment covering 642-671 (SEQGNSKPLNKVFSSEQGLGESSSALSQSV) has biased composition (polar residues). Lys675 is subject to N6-methyllysine. Over residues 698-714 (RGPREQKEQLQKLKDFG) the composition is skewed to basic and acidic residues. Composition is skewed to pro residues over residues 738-753 (MYPP…PMGK), 773-796 (TRPP…PPVI), and 840-870 (PVLP…PPPV). Lys886 participates in a covalent cross-link: Glycyl lysine isopeptide (Lys-Gly) (interchain with G-Cter in SUMO2). Composition is skewed to basic and acidic residues over residues 896 to 930 (ITLR…EPYF), 937 to 1004 (TDHR…DRPP), 1013 to 1023 (GERRTYPEERM), and 1039 to 1058 (RVEK…PPGR). A Glycyl lysine isopeptide (Lys-Gly) (interchain with G-Cter in SUMO2) cross-link involves residue Lys943. The involved in interaction with PPP1CA stretch occupies residues 1326–1333 (KKRVRWAD).

As to quaternary structure, interacts with PPP1CA and NCOA5. Forms a complex with ILF2, ILF3, KHDRBS1, RBMX, NCOA5 and PPP1CA. As to expression, high level expression seen in the brain, adipose tissue, heart and kidney, with a low level expression in muscle, spleen and lung (at protein level).

The protein resides in the nucleus. The protein localises to the nucleus speckle. Plays a role in the reduction of telomerase activity during differentiation of embryonic stem cells by binding to the core promoter of TERT and controlling its down-regulation. The sequence is that of YLP motif-containing protein 1 (Ylpm1) from Rattus norvegicus (Rat).